We begin with the raw amino-acid sequence, 513 residues long: ATP synthase subunit alpha (513 aa).

Position 169-176 (169-176 (GDRQTGKT)) interacts with ATP.

The protein belongs to the ATPase alpha/beta chains family. In terms of assembly, F-type ATPases have 2 components, CF(1) - the catalytic core - and CF(0) - the membrane proton channel. CF(1) has five subunits: alpha(3), beta(3), gamma(1), delta(1), epsilon(1). CF(0) has three main subunits: a(1), b(2) and c(9-12). The alpha and beta chains form an alternating ring which encloses part of the gamma chain. CF(1) is attached to CF(0) by a central stalk formed by the gamma and epsilon chains, while a peripheral stalk is formed by the delta and b chains.

The protein resides in the cell inner membrane. The enzyme catalyses ATP + H2O + 4 H(+)(in) = ADP + phosphate + 5 H(+)(out). Functionally, produces ATP from ADP in the presence of a proton gradient across the membrane. The alpha chain is a regulatory subunit. The chain is ATP synthase subunit alpha from Thioalkalivibrio sulfidiphilus (strain HL-EbGR7).